The primary structure comprises 1349 residues: DNA-directed RNA polymerase subunit beta' (1349 aa).

C70, C72, C85, and C88 together coordinate Zn(2+). Mg(2+) is bound by residues D460, D462, and D464. Zn(2+)-binding residues include C801, C875, C882, and C885.

This sequence belongs to the RNA polymerase beta' chain family. The RNAP catalytic core consists of 2 alpha, 1 beta, 1 beta' and 1 omega subunit. When a sigma factor is associated with the core the holoenzyme is formed, which can initiate transcription. It depends on Mg(2+) as a cofactor. Zn(2+) serves as cofactor.

The enzyme catalyses RNA(n) + a ribonucleoside 5'-triphosphate = RNA(n+1) + diphosphate. Functionally, DNA-dependent RNA polymerase catalyzes the transcription of DNA into RNA using the four ribonucleoside triphosphates as substrates. In Desulfotalea psychrophila (strain LSv54 / DSM 12343), this protein is DNA-directed RNA polymerase subunit beta'.